The sequence spans 390 residues: Sister chromatid cohesion protein DCC1 (390 aa).

It belongs to the DCC1 family. Component of the ctf18-RFC complex which consists of ctf18, ctf8, dscc1 and the RFC complex.

It is found in the nucleus. In terms of biological role, loads pcna onto primed templates regulating velocity, spacing and restart activity of replication forks. May couple DNA replication to sister chromatid cohesion. The chain is Sister chromatid cohesion protein DCC1 (dscc1) from Xenopus laevis (African clawed frog).